Consider the following 246-residue polypeptide: 1-(5-phosphoribosyl)-5-[(5-phosphoribosylamino)methylideneamino] imidazole-4-carboxamide isomerase (246 aa).

Asp-8 functions as the Proton acceptor in the catalytic mechanism. Asp-130 acts as the Proton donor in catalysis.

It belongs to the HisA/HisF family.

Its subcellular location is the cytoplasm. It catalyses the reaction 1-(5-phospho-beta-D-ribosyl)-5-[(5-phospho-beta-D-ribosylamino)methylideneamino]imidazole-4-carboxamide = 5-[(5-phospho-1-deoxy-D-ribulos-1-ylimino)methylamino]-1-(5-phospho-beta-D-ribosyl)imidazole-4-carboxamide. It functions in the pathway amino-acid biosynthesis; L-histidine biosynthesis; L-histidine from 5-phospho-alpha-D-ribose 1-diphosphate: step 4/9. This is 1-(5-phosphoribosyl)-5-[(5-phosphoribosylamino)methylideneamino] imidazole-4-carboxamide isomerase from Halorhodospira halophila (strain DSM 244 / SL1) (Ectothiorhodospira halophila (strain DSM 244 / SL1)).